A 214-amino-acid chain; its full sequence is MGRRPARCYRYCKNKPYPKSRFCRGVPDAKIRIFDLGRKKAKVDEFPLCGHMVSDEYEQLSSEALEAARICANKYMVKSCGKDGFHIRVRLHPFHVIRINKMLSCAGADRLQTGMRGAFGKPQGTVARVHIGQVIMSIRTKLQNKEHVIEALRRAKFKFPGRQKIHISKKWGFTKFNADEFEDMVAEKRLIPDGCGVKYIPSRGPLDKWRALHS.

Arg-32 carries the post-translational modification Citrulline. A Glycyl lysine isopeptide (Lys-Gly) (interchain with G-Cter in SUMO2) cross-link involves residue Lys-175. Lys-188 participates in a covalent cross-link: Glycyl lysine isopeptide (Lys-Gly) (interchain with G-Cter in ubiquitin).

This sequence belongs to the universal ribosomal protein uL16 family. In terms of assembly, component of the large ribosomal subunit. Mature ribosomes consist of a small (40S) and a large (60S) subunit. The 40S subunit contains about 33 different proteins and 1 molecule of RNA (18S). The 60S subunit contains about 49 different proteins and 3 molecules of RNA (28S, 5.8S and 5S). In terms of processing, citrullinated by PADI4. Post-translationally, ufmylated by UFL1.

It localises to the cytoplasm. Its function is as follows. Component of the large ribosomal subunit. Plays a role in the formation of actively translating ribosomes. May play a role in the embryonic brain development. This Homo sapiens (Human) protein is Large ribosomal subunit protein uL16.